The following is a 402-amino-acid chain: uncharacterized protein (402 aa).

Belongs to the peptidase M20 family.

This is an uncharacterized protein from Sinorhizobium fredii (strain NBRC 101917 / NGR234).